We begin with the raw amino-acid sequence, 397 residues long: 1-deoxy-D-xylulose 5-phosphate reductoisomerase (397 aa).

6 residues coordinate NADPH: Thr-17, Gly-18, Ser-19, Ile-20, Asn-47, and Asn-130. Residue Lys-131 participates in 1-deoxy-D-xylulose 5-phosphate binding. Residue Glu-132 participates in NADPH binding. A Mn(2+)-binding site is contributed by Asp-156. The 1-deoxy-D-xylulose 5-phosphate site is built by Ser-157, Glu-158, Ser-182, and His-205. Glu-158 lines the Mn(2+) pocket. Gly-211 is a binding site for NADPH. Residues Ser-218, Asn-223, Lys-224, and Glu-227 each contribute to the 1-deoxy-D-xylulose 5-phosphate site. Position 227 (Glu-227) interacts with Mn(2+).

The protein belongs to the DXR family. Mg(2+) serves as cofactor. The cofactor is Mn(2+).

It catalyses the reaction 2-C-methyl-D-erythritol 4-phosphate + NADP(+) = 1-deoxy-D-xylulose 5-phosphate + NADPH + H(+). It participates in isoprenoid biosynthesis; isopentenyl diphosphate biosynthesis via DXP pathway; isopentenyl diphosphate from 1-deoxy-D-xylulose 5-phosphate: step 1/6. Catalyzes the NADPH-dependent rearrangement and reduction of 1-deoxy-D-xylulose-5-phosphate (DXP) to 2-C-methyl-D-erythritol 4-phosphate (MEP). This Allorhizobium ampelinum (strain ATCC BAA-846 / DSM 112012 / S4) (Agrobacterium vitis (strain S4)) protein is 1-deoxy-D-xylulose 5-phosphate reductoisomerase.